A 436-amino-acid chain; its full sequence is D-amino acid dehydrogenase (436 aa).

3–17 (ILILGSGVIGVTSAW) lines the FAD pocket.

This sequence belongs to the DadA oxidoreductase family. The cofactor is FAD.

It catalyses the reaction a D-alpha-amino acid + A + H2O = a 2-oxocarboxylate + AH2 + NH4(+). It functions in the pathway amino-acid degradation; D-alanine degradation; NH(3) and pyruvate from D-alanine: step 1/1. Oxidative deamination of D-amino acids. This chain is D-amino acid dehydrogenase, found in Photorhabdus laumondii subsp. laumondii (strain DSM 15139 / CIP 105565 / TT01) (Photorhabdus luminescens subsp. laumondii).